Here is a 1664-residue protein sequence, read N- to C-terminus: MYND-type zinc finger-containing chromatin reader Zmynd8 (1664 aa).

3 stretches are compositionally biased toward low complexity: residues 1–16 (MESTDSSDSSGDSLKS), 30–40 (SPQPQLQSSSL), and 61–84 (SAPPGSANCSSNSSSSSPSNINVG). Disordered stretches follow at residues 1–84 (MEST…INVG), 251–271 (SLSNSWSNDDKGPRRSNLRSE), and 295–323 (LALNTSGEGESSLFSDASDTKTTTAKTPE). The span at 258-271 (NDDKGPRRSNLRSE) shows a compositional bias: basic and acidic residues. A compositionally biased stretch (polar residues) spans 296-308 (ALNTSGEGESSLF). Positions 309-320 (SDASDTKTTTAK) are enriched in low complexity. Residues 343–389 (DPFCWKCRGCGKLMPCSKCLRSFHSYCVRPATTKFDSSWKCPECQVI) form a PHD-type zinc finger. Residues C346, C349, C358, C361, H366, C369, C383, and C386 each coordinate Zn(2+). One can recognise a Bromo domain in the interval 401-504 (VSVDLLSQLL…KVCRQEANEI (104 aa)). Positions 507, 510, and 525 each coordinate Zn(2+). Residues 528–579 (PHLLLWAKLKGFPYWPAKAMGSSNSTLVNVRFFGKHDRAFVPVKDCFLYSAQ) enclose the PWWP domain. Disordered regions lie at residues 672–693 (KTKATESGNESDQSPSPTKKLS), 747–815 (ESVE…QNEN), 857–905 (KIPR…RQQE), and 919–1139 (TEVM…TNTS). The segment covering 676 to 690 (TESGNESDQSPSPTK) has biased composition (polar residues). Positions 775–784 (HKRKSKHARK) are enriched in basic residues. Residues 785–800 (QHDNQDNQIEEAEKTG) are compositionally biased toward basic and acidic residues. Pro residues predominate over residues 874–884 (IPLPTAPPPKQ). A compositionally biased stretch (polar residues) spans 935-952 (PANQPQTDQVPLQQETIT). Low complexity predominate over residues 953-962 (AQPESQMPAA). Over residues 1006 to 1019 (PPMPLPMPPPPPLP) the composition is skewed to pro residues. Residues 1037–1053 (TTIQRVSQKQGGKSTDT) are compositionally biased toward polar residues. Low complexity predominate over residues 1073–1097 (SPTHSPLLSTAPSPSASPKPTSTLA). Positions 1399, 1402, 1410, 1411, 1417, 1421, 1429, and 1433 each coordinate Zn(2+). The segment at 1399–1433 (CANCMREAQLYCCWNTSYCDYPCQQLHWPGHSATC) adopts an MYND-type zinc-finger fold. The disordered stretch occupies residues 1613-1648 (VPKATGRSGKNNSRMRQTYSNNINNSNPQGMRCNNN). The span at 1620 to 1648 (SGKNNSRMRQTYSNNINNSNPQGMRCNNN) shows a compositional bias: polar residues.

The protein localises to the nucleus. The protein resides in the chromosome. Chromatin reader that recognizes specific histone signatures to regulate transcription. Plays a role in neuronal development. The protein is MYND-type zinc finger-containing chromatin reader Zmynd8 of Drosophila melanogaster (Fruit fly).